Consider the following 236-residue polypeptide: MKKTTQLYEGKAKKVFLTDDADLVIQEFKDDATAFNNKKKGSIAEKGVVNNAISSKLFTLLEAQGIRTHFVEKLSDRDMLCRYLDIIKVEVVVRNIAAGSLVKRYGFSEGTVLAMPIVEFYLKDDDLDDPLMNEAHAVALGVATLEELAFLKNRAEAINVLLKAFFAERKLKLVDFKLEFGRHNNEILLGDEISPDTCRFWDLETNEKMDKDRFRFDLGGVEDAYSEVQKRVLDLD.

The protein belongs to the SAICAR synthetase family.

The enzyme catalyses 5-amino-1-(5-phospho-D-ribosyl)imidazole-4-carboxylate + L-aspartate + ATP = (2S)-2-[5-amino-1-(5-phospho-beta-D-ribosyl)imidazole-4-carboxamido]succinate + ADP + phosphate + 2 H(+). The protein operates within purine metabolism; IMP biosynthesis via de novo pathway; 5-amino-1-(5-phospho-D-ribosyl)imidazole-4-carboxamide from 5-amino-1-(5-phospho-D-ribosyl)imidazole-4-carboxylate: step 1/2. The chain is Phosphoribosylaminoimidazole-succinocarboxamide synthase from Pelodictyon phaeoclathratiforme (strain DSM 5477 / BU-1).